A 493-amino-acid chain; its full sequence is Glutamyl-tRNA(Gln) amidotransferase subunit A (493 aa).

Active-site charge relay system residues include K78 and S158. Residue S182 is the Acyl-ester intermediate of the active site.

It belongs to the amidase family. GatA subfamily. As to quaternary structure, heterotrimer of A, B and C subunits.

It catalyses the reaction L-glutamyl-tRNA(Gln) + L-glutamine + ATP + H2O = L-glutaminyl-tRNA(Gln) + L-glutamate + ADP + phosphate + H(+). Allows the formation of correctly charged Gln-tRNA(Gln) through the transamidation of misacylated Glu-tRNA(Gln) in organisms which lack glutaminyl-tRNA synthetase. The reaction takes place in the presence of glutamine and ATP through an activated gamma-phospho-Glu-tRNA(Gln). This is Glutamyl-tRNA(Gln) amidotransferase subunit A from Rickettsia bellii (strain RML369-C).